A 103-amino-acid polypeptide reads, in one-letter code: Large ribosomal subunit protein bL21 (103 aa).

Belongs to the bacterial ribosomal protein bL21 family. In terms of assembly, part of the 50S ribosomal subunit. Contacts protein L20.

Its function is as follows. This protein binds to 23S rRNA in the presence of protein L20. The polypeptide is Large ribosomal subunit protein bL21 (Clostridium perfringens (strain ATCC 13124 / DSM 756 / JCM 1290 / NCIMB 6125 / NCTC 8237 / Type A)).